A 253-amino-acid chain; its full sequence is NAC transcription factor 32 (253 aa).

One can recognise an NAC domain in the interval 10–160 (FPPGFRFHPT…DWVLCRIYNK (151 aa)). The DNA-binding element occupies 106 to 166 (VGIKKALVFY…IYNKKGVIEK (61 aa)).

In terms of tissue distribution, expressed in germinating seeds, roots, leaf veins, open flowers and silique stalks.

Its subcellular location is the nucleus. In terms of biological role, transcriptional activator that positively regulates age-dependent senescence, dark-induced leaf senescence and stress-induced senescence. Regulates leaf senescence through the modulation of the expression of senescence-associated genes SGR1/NYE1, SAG113 and SAUR36/SAG201, which are involved in chlorophyll degradation, and abscisic acid (ABA) and auxin promotion of senescence, respectively. Promotes reactive oxygen species (ROS) production during age-dependent and stress-induced senescence. Positively regulates auxin-mediated responses in roots. Stress-responsive NAC transcription factor involved in ABA-inducible leaf senescence signaling. Required for normal seed development and morphology. This Arabidopsis thaliana (Mouse-ear cress) protein is NAC transcription factor 32.